A 470-amino-acid chain; its full sequence is Acetyl-CoA decarbonylase/synthase complex subunit gamma (470 aa).

Residues 1–62 (MKVKSPLEVY…DPKVKKKLEE (62 aa)) form the 4Fe-4S domain. Residues cysteine 18, cysteine 21, cysteine 26, and cysteine 43 each coordinate [4Fe-4S] cluster.

In terms of assembly, heterodimer of delta and gamma chains. The ACDS complex is made up of alpha, epsilon, beta, gamma and delta chains with a probable stoichiometry of (alpha(2)epsilon(2))(4)-beta(8)-(gamma(1)delta(1))(8). The cofactor is corrinoid. [4Fe-4S] cluster is required as a cofactor.

It catalyses the reaction 5,6,7,8-tetrahydrosarcinapterin + methyl-Co(III)-[corrinoid Fe-S protein] = 5-methyltetrahydrosarcinapterin + Co(I)-[corrinoid Fe-S protein] + H(+). Part of a complex that catalyzes the reversible cleavage of acetyl-CoA, allowing autotrophic growth from CO(2). In Archaeoglobus fulgidus (strain ATCC 49558 / DSM 4304 / JCM 9628 / NBRC 100126 / VC-16), this protein is Acetyl-CoA decarbonylase/synthase complex subunit gamma.